The chain runs to 425 residues: GTPase Obg (425 aa).

An Obg domain is found at 1-158 (MFKDYAKIHV…LWLELELKLL (158 aa)). One can recognise an OBG-type G domain in the interval 159–329 (ADVGLVGFPN…LIYRTYRLLE (171 aa)). GTP-binding positions include 165–172 (GFPNAGKS), 190–194 (FTTLE), 212–215 (DIPG), 282–285 (NKTD), and 310–312 (SAL). Mg(2+)-binding residues include S172 and T192. The region spanning 341 to 421 (VPDERETDVT…IGRFEFEYSE (81 aa)) is the OCT domain.

It belongs to the TRAFAC class OBG-HflX-like GTPase superfamily. OBG GTPase family. In terms of assembly, monomer. It depends on Mg(2+) as a cofactor.

Its subcellular location is the cytoplasm. In terms of biological role, an essential GTPase which binds GTP, GDP and possibly (p)ppGpp with moderate affinity, with high nucleotide exchange rates and a fairly low GTP hydrolysis rate. Plays a role in control of the cell cycle, stress response, ribosome biogenesis and in those bacteria that undergo differentiation, in morphogenesis control. This chain is GTPase Obg, found in Desulforudis audaxviator (strain MP104C).